The sequence spans 191 residues: Crossover junction endodeoxyribonuclease RuvC (191 aa).

Active-site residues include Asp7, Glu67, and Asp140. 3 residues coordinate Mg(2+): Asp7, Glu67, and Asp140.

The protein belongs to the RuvC family. Homodimer which binds Holliday junction (HJ) DNA. The HJ becomes 2-fold symmetrical on binding to RuvC with unstacked arms; it has a different conformation from HJ DNA in complex with RuvA. In the full resolvosome a probable DNA-RuvA(4)-RuvB(12)-RuvC(2) complex forms which resolves the HJ. It depends on Mg(2+) as a cofactor.

It is found in the cytoplasm. The catalysed reaction is Endonucleolytic cleavage at a junction such as a reciprocal single-stranded crossover between two homologous DNA duplexes (Holliday junction).. The RuvA-RuvB-RuvC complex processes Holliday junction (HJ) DNA during genetic recombination and DNA repair. Endonuclease that resolves HJ intermediates. Cleaves cruciform DNA by making single-stranded nicks across the HJ at symmetrical positions within the homologous arms, yielding a 5'-phosphate and a 3'-hydroxyl group; requires a central core of homology in the junction. The consensus cleavage sequence is 5'-(A/T)TT(C/G)-3'. Cleavage occurs on the 3'-side of the TT dinucleotide at the point of strand exchange. HJ branch migration catalyzed by RuvA-RuvB allows RuvC to scan DNA until it finds its consensus sequence, where it cleaves and resolves the cruciform DNA. The chain is Crossover junction endodeoxyribonuclease RuvC from Pelodictyon phaeoclathratiforme (strain DSM 5477 / BU-1).